The following is a 445-amino-acid chain: Na(+)-translocating NADH-quinone reductase subunit A (445 aa).

This sequence belongs to the NqrA family. In terms of assembly, composed of six subunits; NqrA, NqrB, NqrC, NqrD, NqrE and NqrF.

It catalyses the reaction a ubiquinone + n Na(+)(in) + NADH + H(+) = a ubiquinol + n Na(+)(out) + NAD(+). NQR complex catalyzes the reduction of ubiquinone-1 to ubiquinol by two successive reactions, coupled with the transport of Na(+) ions from the cytoplasm to the periplasm. NqrA to NqrE are probably involved in the second step, the conversion of ubisemiquinone to ubiquinol. This chain is Na(+)-translocating NADH-quinone reductase subunit A, found in Pseudomonas aeruginosa (strain UCBPP-PA14).